Consider the following 427-residue polypeptide: Putative acyl-CoA thioester hydrolase YbhC (427 aa).

The signal sequence occupies residues 1 to 21 (MNTFSVSRLALALAFGVTLTA). C22 is lipidated: N-palmitoyl cysteine. Residue C22 is the site of S-diacylglycerol cysteine attachment. Positions 23–42 (SSTPPDQRPSDQTAPGTSSR) are disordered. Residues C185 and C197 are joined by a disulfide bond. Catalysis depends on D285, which acts as the Nucleophile. R345 contributes to the substrate binding site.

Belongs to the pectinesterase family.

The protein resides in the cell outer membrane. Putative thioesterase. Does not bind pectin, and has no pectinesterase activity. The polypeptide is Putative acyl-CoA thioester hydrolase YbhC (ybhC) (Escherichia coli (strain K12)).